Here is a 75-residue protein sequence, read N- to C-terminus: Large ribosomal subunit protein bL28 (75 aa).

This sequence belongs to the bacterial ribosomal protein bL28 family.

The polypeptide is Large ribosomal subunit protein bL28 (Buchnera aphidicola subsp. Acyrthosiphon pisum (strain APS) (Acyrthosiphon pisum symbiotic bacterium)).